A 651-amino-acid polypeptide reads, in one-letter code: Mitogen-activated protein kinase kinase kinase 2 (651 aa).

The region spanning 68–330 is the Protein kinase domain; the sequence is WRKGQLIGRG…ASELLKHPFV (263 aa). ATP is bound by residues 74 to 82 and Lys-97; that span reads IGRGAFGTV. The stretch at 105–130 forms a coiled coil; it reads CASKEKTQAHIQELEEEVKLLKNLSH. Residues Lys-108 and Lys-110 each participate in a glycyl lysine isopeptide (Lys-Gly) (interchain with G-Cter in ubiquitin) cross-link. Residue Asp-196 is the Proton acceptor of the active site. Disordered stretches follow at residues 460-483, 537-601, and 618-651; these read GNGETETKVSMEVDHPSYSEDENE, RGFL…VALS, and KRREITRQAGMGSSPRDRSLSRHREKSRFASPGK. Over residues 464-477 the composition is skewed to basic and acidic residues; that stretch reads TETKVSMEVDHPSY. Residues 570 to 599 show a composition bias toward polar residues; the sequence is SPESGNSSGAPKNSNASAGAEQESNSQSVA. Residues 605–628 adopt a coiled-coil conformation; that stretch reads RKWKEELDQELERKRREITRQAGM.

It belongs to the protein kinase superfamily. STE Ser/Thr protein kinase family. MAP kinase kinase kinase subfamily. As to expression, expressed in roots and flowers.

Its subcellular location is the cytoplasm. It is found in the cytoskeleton. It carries out the reaction L-seryl-[protein] + ATP = O-phospho-L-seryl-[protein] + ADP + H(+). It catalyses the reaction L-threonyl-[protein] + ATP = O-phospho-L-threonyl-[protein] + ADP + H(+). In terms of biological role, involved in cortical microtubules organization and stabilization by regulating the phosphorylation state of microtubule-associated proteins such as MAP65-1. This chain is Mitogen-activated protein kinase kinase kinase 2 (ANP2), found in Arabidopsis thaliana (Mouse-ear cress).